The chain runs to 336 residues: CMP-sialic acid transporter (336 aa).

Topologically, residues 1-9 are cytoplasmic; sequence MAQARENVS. Residues 10–30 traverse the membrane as a helical segment; sequence LFFKLYCLAVMTLVAAAYTVA. Residues 31–45 lie on the Lumenal side of the membrane; the sequence is LRYTRTTAKELYFST. A helical transmembrane segment spans residues 46-64; that stretch reads TAVCVTEVIKLLISVGLLA. Lys55 is a CMP-N-acetyl-beta-neuraminate binding site. Over 65–87 the chain is Cytoplasmic; sequence KETGSLGRFKASLSENVLGSPKE. Residues 88–108 form a helical membrane-spanning segment; sequence LMKLSVPSLVYAVQNNMAFLA. 101–102 contacts CMP-N-acetyl-beta-neuraminate; it reads QN. The Lumenal segment spans residues 109–114; the sequence is LSNLDA. Residues 115-135 traverse the membrane as a helical segment; that stretch reads AVYQVTYQLKIPCTALCTVLM. Residue 117–124 coordinates CMP-N-acetyl-beta-neuraminate; sequence YQVTYQLK. The Cytoplasmic portion of the chain corresponds to 136 to 141; sequence LNRTLS. The chain crosses the membrane as a helical span at residues 142–160; it reads KLQWVSVFMLCGGVILVQW. Topologically, residues 161–175 are lumenal; the sequence is KPAQATKVVVEQSPL. Residues 176–196 form a helical membrane-spanning segment; that stretch reads LGFGAIAIAVLCSGFAGVYFE. Ser188 contacts CMP-N-acetyl-beta-neuraminate. The Cytoplasmic portion of the chain corresponds to 197–209; it reads KVLKSSDTSLWVR. Position 210–214 (210–214) interacts with CMP-N-acetyl-beta-neuraminate; it reads NIQMY. The helical transmembrane segment at 210 to 228 threads the bilayer; the sequence is NIQMYLSGIVVTLVGTYLS. Residues 229–243 are Lumenal-facing; the sequence is DGAEIKEKGFFYGYT. A helical transmembrane segment spans residues 244–262; that stretch reads YYVWFVIFLASVGGLYTSV. Topologically, residues 263–269 are cytoplasmic; the sequence is VVKYTDN. The chain crosses the membrane as a helical span at residues 270-288; the sequence is IMKGFSAAAAIVLSTIASV. Lys272 lines the CMP-N-acetyl-beta-neuraminate pocket. Topologically, residues 289–296 are lumenal; it reads MLFGLQIT. The helical transmembrane segment at 297-315 threads the bilayer; that stretch reads LSFAMGALLVCISIYLYGL. The Cytoplasmic segment spans residues 316–336; it reads PRQDTTCIQQEATSKERVIGV. Positions 316 to 336 are disordered; that stretch reads PRQDTTCIQQEATSKERVIGV.

This sequence belongs to the nucleotide-sugar transporter family. SLC35A subfamily. As to quaternary structure, monomer.

The protein resides in the golgi apparatus membrane. The catalysed reaction is CMP-N-acetyl-beta-neuraminate(in) + CMP(out) = CMP-N-acetyl-beta-neuraminate(out) + CMP(in). It carries out the reaction CMP-N-acetyl-beta-neuraminate(in) + AMP(out) = CMP-N-acetyl-beta-neuraminate(out) + AMP(in). The enzyme catalyses CDP-L-ribitol(in) + CDP(out) = CDP-L-ribitol(out) + CDP(in). It catalyses the reaction UMP(out) + CMP-N-acetyl-beta-neuraminate(in) = UMP(in) + CMP-N-acetyl-beta-neuraminate(out). Functionally, transports CMP-sialic acid from the cytosol into the Golgi apparatus, functioning as an antiporter that exchanges CMP-sialic acid for CMP. Binds both CMP-sialic acid and free CMP, but has higher affinity for free CMP. Also able to exchange CMP-sialic acid for AMP and UMP. Also mediates the transport of CDP-ribitol. In Cricetulus griseus (Chinese hamster), this protein is CMP-sialic acid transporter (SLC35A1).